Reading from the N-terminus, the 455-residue chain is Chromosomal replication initiator protein DnaA (455 aa).

The tract at residues 1–73 is domain I, interacts with DnaA modulators; that stretch reads MTISPQYIWN…LEEVETIVGY (73 aa). The tract at residues 73–114 is domain II; that stretch reads YPIAVKLTTSQEQNLRIVDKNKDNLSSTKLQNKRQQESPKLN. The tract at residues 115-331 is domain III, AAA+ region; it reads QLNPRYNFSR…GALIRAVTYI (217 aa). The ATP site is built by Gly159, Gly161, Lys162, and Thr163. Residues 332–455 are domain IV, binds dsDNA; it reads SISGLSMTVE…RINIASRNQN (124 aa).

The protein belongs to the DnaA family. Oligomerizes as a right-handed, spiral filament on DNA at oriC.

Its subcellular location is the cytoplasm. Its function is as follows. Plays an essential role in the initiation and regulation of chromosomal replication. ATP-DnaA binds to the origin of replication (oriC) to initiate formation of the DNA replication initiation complex once per cell cycle. Binds the DnaA box (a 9 base pair repeat at the origin) and separates the double-stranded (ds)DNA. Forms a right-handed helical filament on oriC DNA; dsDNA binds to the exterior of the filament while single-stranded (ss)DNA is stabiized in the filament's interior. The ATP-DnaA-oriC complex binds and stabilizes one strand of the AT-rich DNA unwinding element (DUE), permitting loading of DNA polymerase. After initiation quickly degrades to an ADP-DnaA complex that is not apt for DNA replication. Binds acidic phospholipids. This chain is Chromosomal replication initiator protein DnaA, found in Crocosphaera subtropica (strain ATCC 51142 / BH68) (Cyanothece sp. (strain ATCC 51142)).